The primary structure comprises 774 residues: Fatty acid oxidation complex subunit alpha (774 aa).

2 disordered regions span residues 1–31 (MSKE…VGAS) and 617–641 (YLYS…RNSF). An enoyl-CoA hydratase region spans residues 1–224 (MSKENIVTRE…KMGLVDDVVP (224 aa)). 2 stretches are compositionally biased toward polar residues: residues 8-31 (TREN…VGAS) and 620-637 (SNPT…SPAK). A 3-hydroxyacyl-CoA dehydrogenase region spans residues 340–774 (RAIHRVGVLG…NIDEVTDVAS (435 aa)).

This sequence in the N-terminal section; belongs to the enoyl-CoA hydratase/isomerase family. It in the central section; belongs to the 3-hydroxyacyl-CoA dehydrogenase family. Heterotetramer of two alpha chains (FadJ) and two beta chains (FadI).

It is found in the cytoplasm. It catalyses the reaction a (3S)-3-hydroxyacyl-CoA = a (2E)-enoyl-CoA + H2O. The catalysed reaction is a 4-saturated-(3S)-3-hydroxyacyl-CoA = a (3E)-enoyl-CoA + H2O. The enzyme catalyses a (3S)-3-hydroxyacyl-CoA + NAD(+) = a 3-oxoacyl-CoA + NADH + H(+). It carries out the reaction (3S)-3-hydroxybutanoyl-CoA = (3R)-3-hydroxybutanoyl-CoA. It functions in the pathway lipid metabolism; fatty acid beta-oxidation. Catalyzes the formation of a hydroxyacyl-CoA by addition of water on enoyl-CoA. Also exhibits 3-hydroxyacyl-CoA epimerase and 3-hydroxyacyl-CoA dehydrogenase activities. This Yersinia pestis (strain Pestoides F) protein is Fatty acid oxidation complex subunit alpha.